We begin with the raw amino-acid sequence, 543 residues long: uncharacterized protein (543 aa).

The 258-residue stretch at 203–460 folds into the Radical SAM core domain; sequence NYPYIIAEIE…FLWFKEKVRE (258 aa). Positions 470–534 constitute a TRAM domain; that stretch reads VVPKGTILRD…RRSITGKVVR (65 aa).

This is an uncharacterized protein from Methanocaldococcus jannaschii (strain ATCC 43067 / DSM 2661 / JAL-1 / JCM 10045 / NBRC 100440) (Methanococcus jannaschii).